Consider the following 287-residue polypeptide: Ethanolamine ammonia-lyase small subunit (287 aa).

3 residues coordinate adenosylcob(III)alamin: V168, E189, and C218.

This sequence belongs to the EutC family. As to quaternary structure, the basic unit is a heterodimer which dimerizes to form tetramers. The heterotetramers trimerize; 6 large subunits form a core ring with 6 small subunits projecting outwards. Requires adenosylcob(III)alamin as cofactor.

The protein resides in the bacterial microcompartment. It carries out the reaction ethanolamine = acetaldehyde + NH4(+). Its pathway is amine and polyamine degradation; ethanolamine degradation. Functionally, catalyzes the deamination of various vicinal amino-alcohols to oxo compounds. Allows this organism to utilize ethanolamine as the sole source of nitrogen and carbon in the presence of external vitamin B12. The chain is Ethanolamine ammonia-lyase small subunit from Pseudomonas syringae pv. tomato (strain ATCC BAA-871 / DC3000).